A 943-amino-acid polypeptide reads, in one-letter code: Isoleucine--tRNA ligase (943 aa).

Residues 59–69 (PYANGQIHLGH) carry the 'HIGH' region motif. E577 provides a ligand contact to L-isoleucyl-5'-AMP. Residues 618 to 622 (KMSKS) carry the 'KMSKS' region motif. K621 serves as a coordination point for ATP. C906, C909, C926, and C929 together coordinate Zn(2+).

It belongs to the class-I aminoacyl-tRNA synthetase family. IleS type 1 subfamily. As to quaternary structure, monomer. Requires Zn(2+) as cofactor.

Its subcellular location is the cytoplasm. It catalyses the reaction tRNA(Ile) + L-isoleucine + ATP = L-isoleucyl-tRNA(Ile) + AMP + diphosphate. In terms of biological role, catalyzes the attachment of isoleucine to tRNA(Ile). As IleRS can inadvertently accommodate and process structurally similar amino acids such as valine, to avoid such errors it has two additional distinct tRNA(Ile)-dependent editing activities. One activity is designated as 'pretransfer' editing and involves the hydrolysis of activated Val-AMP. The other activity is designated 'posttransfer' editing and involves deacylation of mischarged Val-tRNA(Ile). This is Isoleucine--tRNA ligase from Xylella fastidiosa (strain 9a5c).